We begin with the raw amino-acid sequence, 278 residues long: Large ribosomal subunit protein uL2 (278 aa).

Composition is skewed to basic residues over residues 210-220 and 257-278; these read GRMRWKGKRPS and TRRKHKPSDKLIVRRRKSNKKR. Residues 210–278 form a disordered region; that stretch reads GRMRWKGKRP…VRRRKSNKKR (69 aa).

Belongs to the universal ribosomal protein uL2 family. In terms of assembly, part of the 50S ribosomal subunit. Forms a bridge to the 30S subunit in the 70S ribosome.

In terms of biological role, one of the primary rRNA binding proteins. Required for association of the 30S and 50S subunits to form the 70S ribosome, for tRNA binding and peptide bond formation. It has been suggested to have peptidyltransferase activity; this is somewhat controversial. Makes several contacts with the 16S rRNA in the 70S ribosome. In Acidothermus cellulolyticus (strain ATCC 43068 / DSM 8971 / 11B), this protein is Large ribosomal subunit protein uL2.